The sequence spans 156 residues: Small ribosomal subunit protein uS7 (156 aa).

Belongs to the universal ribosomal protein uS7 family. In terms of assembly, part of the 30S ribosomal subunit. Contacts proteins S9 and S11.

One of the primary rRNA binding proteins, it binds directly to 16S rRNA where it nucleates assembly of the head domain of the 30S subunit. Is located at the subunit interface close to the decoding center, probably blocks exit of the E-site tRNA. The sequence is that of Small ribosomal subunit protein uS7 from Bartonella quintana (strain Toulouse) (Rochalimaea quintana).